A 182-amino-acid chain; its full sequence is MSVQPETMPDSSNKTNPTVKEVIAYLADKFPLCFSIEGEAKPLKVGLSQDLAEALADDEKVSKTLLRQVLRSYTMSWRYLACCKANAQRIGLQGENVGIVDEAQAEHAAQSLAVAKEAYAARKAEQRKEQRKDFFKKKAREERNAKTMNKAVKKGSPKKDTFAKATAESLAVLTHKFSKGNK.

The tract at residues 125–160 is disordered; the sequence is EQRKEQRKDFFKKKAREERNAKTMNKAVKKGSPKKD.

It belongs to the ProQ family.

The protein localises to the cytoplasm. RNA chaperone with significant RNA binding, RNA strand exchange and RNA duplexing activities. The polypeptide is RNA chaperone ProQ (Haemophilus ducreyi (strain 35000HP / ATCC 700724)).